The chain runs to 84 residues: Transcriptional regulator WhiB1 (84 aa).

Positions 8 to 70 constitute a 4Fe-4S Wbl-type domain; that stretch reads VCRDEDPELF…GGMSEDERRA (63 aa). 4 residues coordinate [4Fe-4S] cluster: cysteine 9, cysteine 37, cysteine 40, and cysteine 46.

The protein belongs to the WhiB family. Homodimer. [4Fe-4S] cluster is required as a cofactor. Post-translationally, the Fe-S cluster can be nitrosylated by nitric oxide (NO). Upon Fe-S cluster removal intramolecular disulfide bonds are formed.

The protein localises to the cytoplasm. In terms of biological role, acts as a transcriptional regulator. Probably redox-responsive. The apo- but not holo-form probably binds DNA. The protein is Transcriptional regulator WhiB1 (whiB1) of Mycobacterium tuberculosis (strain CDC 1551 / Oshkosh).